A 497-amino-acid chain; its full sequence is Glycerol kinase (497 aa).

An ADP-binding site is contributed by threonine 12. Threonine 12, threonine 13, and serine 14 together coordinate ATP. Threonine 12 lines the sn-glycerol 3-phosphate pocket. Arginine 16 contributes to the ADP binding site. Positions 82, 83, 134, and 243 each coordinate sn-glycerol 3-phosphate. 5 residues coordinate glycerol: arginine 82, glutamate 83, tyrosine 134, aspartate 243, and glutamine 244. The ADP site is built by threonine 265 and glycine 308. Residues threonine 265, glycine 308, glutamine 312, and glycine 409 each contribute to the ATP site. Glycine 409 and asparagine 413 together coordinate ADP.

The protein belongs to the FGGY kinase family.

It catalyses the reaction glycerol + ATP = sn-glycerol 3-phosphate + ADP + H(+). The protein operates within polyol metabolism; glycerol degradation via glycerol kinase pathway; sn-glycerol 3-phosphate from glycerol: step 1/1. Its activity is regulated as follows. Inhibited by fructose 1,6-bisphosphate (FBP). Functionally, key enzyme in the regulation of glycerol uptake and metabolism. Catalyzes the phosphorylation of glycerol to yield sn-glycerol 3-phosphate. In Nitratidesulfovibrio vulgaris (strain ATCC 29579 / DSM 644 / CCUG 34227 / NCIMB 8303 / VKM B-1760 / Hildenborough) (Desulfovibrio vulgaris), this protein is Glycerol kinase.